A 377-amino-acid chain; its full sequence is RING finger protein 215 (377 aa).

At 1-22 the chain is on the cytoplasmic side; that stretch reads MGPAARPALRSPPPPPPPPPSP. Positions 1–22 are disordered; it reads MGPAARPALRSPPPPPPPPPSP. The segment covering 10–22 has biased composition (pro residues); sequence RSPPPPPPPPPSP. The helical transmembrane segment at 23 to 43 threads the bilayer; the sequence is LLLLLPLLPLWLGLAGPGAAA. Topologically, residues 44 to 250 are extracellular; sequence DGSEPAAGAG…GGSRAQEQKP (207 aa). Asparagine 186 is a glycosylation site (N-linked (GlcNAc...) asparagine). Residues 251-271 traverse the membrane as a helical segment; sequence LQQLWNAILLVAMLLCTGLVV. The Cytoplasmic segment spans residues 272–377; sequence QAQRQASRQS…NVLGNRYSDD (106 aa). The RING-type; atypical zinc-finger motif lies at 325-366; the sequence is CAVCLDYFCNKQWLRVLPCKHEFHRDCVDPWLMLQQTCPLCK.

Its subcellular location is the membrane. This chain is RING finger protein 215 (RNF215), found in Homo sapiens (Human).